We begin with the raw amino-acid sequence, 92 residues long: Small ribosomal subunit protein uS19c (92 aa).

This sequence belongs to the universal ribosomal protein uS19 family. Component of the chloroplast small ribosomal subunit (SSU). Mature 70S chloroplast ribosomes of higher plants consist of a small (30S) and a large (50S) subunit. The 30S small subunit contains 1 molecule of ribosomal RNA (16S rRNA) and 24 different proteins. The 50S large subunit contains 3 rRNA molecules (23S, 5S and 4.5S rRNA) and 33 different proteins. uS19c binds directly to 16S ribosomal RNA.

Its subcellular location is the plastid. The protein localises to the chloroplast. Its function is as follows. Component of the chloroplast ribosome (chloro-ribosome), a dedicated translation machinery responsible for the synthesis of chloroplast genome-encoded proteins, including proteins of the transcription and translation machinery and components of the photosynthetic apparatus. In Spinacia oleracea (Spinach), this protein is Small ribosomal subunit protein uS19c (rps19).